Here is a 64-residue protein sequence, read N- to C-terminus: Large ribosomal subunit protein uL29 (64 aa).

The protein belongs to the universal ribosomal protein uL29 family.

In Coprothermobacter proteolyticus (strain ATCC 35245 / DSM 5265 / OCM 4 / BT), this protein is Large ribosomal subunit protein uL29.